A 717-amino-acid chain; its full sequence is MGRLMIAVLLCVMISQGFCSGVFELKLQEFLNKKGVTGNANCCKGSAAEGHQCECKTFFRICLKHYQANVSPDPPCTYGGAVTPVLGSNSFQVPESFPDSSFTNPIPFAFGFTWPGTFSLIIEALHTDSTDDLSTENPDRLISRMTTQRHLTVGEEWSQDLQVGGRTELKYSYRFVCDEHYYGEGCSVFCRPRDDTFGHFTCGERGEIICNSGWKGQYCTEPICLPGCDEDHGFCDKPGECKCRVGFSGKYCDDCIRYPGCLHGTCQQPWQCNCQEGWGGLFCNQDLNYCTHHKPCQNGATCTNTGQGSYTCSCRPGFTGDSCEIEVNECSGSPCRNGGSCTDLENTYSCTCPPGFYGRNCELSAMTCADGPCFNGGHCADNPEGGYFCQCPMGYAGFNCEKKIDHCSSNPCSNDAQCLDLVDSYLCQCPEGFTGTHCEDNIDECATYPCQNGGTCQDGLSDYTCTCPPGYTGKNCTSAVNKCLHNPCHNGATCHEMDNRYVCACIPGYGGRNCQFLLPENPQGQAIVEGADKRYSYEEDDGGFPWTAVCAGIILVLLVLIGGSVFVIYIRLKLQQRSQQIDSHSEIETMNNLTNNRSREKDLSVSIIGATQVKNINKKVDFQSDGDKNGFKSRYSLVDYNLVHELKQEDLGKEDSERSEATKCEPLDSDSEEKHRNHLKSDSSERKRTESLCKDTKYQSVFVLSEEKDECIIATEV.

The N-terminal stretch at 1–19 (MGRLMIAVLLCVMISQGFC) is a signal peptide. Residues 20–547 (SGVFELKLQE…EEDDGGFPWT (528 aa)) are Extracellular-facing. One can recognise a DSL domain in the interval 175–219 (FVCDEHYYGEGCSVFCRPRDDTFGHFTCGERGEIICNSGWKGQYC). Disulfide bonds link cysteine 177/cysteine 186, cysteine 190/cysteine 202, cysteine 210/cysteine 219, cysteine 224/cysteine 235, cysteine 228/cysteine 241, cysteine 243/cysteine 252, cysteine 261/cysteine 266, cysteine 274/cysteine 283, cysteine 290/cysteine 302, cysteine 296/cysteine 312, cysteine 314/cysteine 323, cysteine 330/cysteine 341, cysteine 335/cysteine 350, cysteine 352/cysteine 361, cysteine 368/cysteine 379, cysteine 373/cysteine 389, cysteine 391/cysteine 400, cysteine 407/cysteine 418, cysteine 412/cysteine 427, cysteine 429/cysteine 438, cysteine 445/cysteine 456, cysteine 450/cysteine 465, cysteine 467/cysteine 476, cysteine 483/cysteine 494, cysteine 488/cysteine 503, and cysteine 505/cysteine 514. EGF-like domains follow at residues 220–253 (TEPI…KYCD), 257–284 (RYPG…LFCN), and 286–324 (DLNY…DSCE). One can recognise an EGF-like 4; calcium-binding domain in the interval 326–362 (EVNECSGSPCRNGGSCTDLENTYSCTCPPGFYGRNCE). EGF-like domains lie at 364–401 (SAMT…FNCE) and 403–439 (KIDH…THCE). The region spanning 441 to 477 (NIDECATYPCQNGGTCQDGLSDYTCTCPPGYTGKNCT) is the EGF-like 7; calcium-binding domain. Residue asparagine 475 is glycosylated (N-linked (GlcNAc...) asparagine). In terms of domain architecture, EGF-like 8 spans 479-515 (AVNKCLHNPCHNGATCHEMDNRYVCACIPGYGGRNCQ). A helical membrane pass occupies residues 548 to 568 (AVCAGIILVLLVLIGGSVFVI). The Cytoplasmic portion of the chain corresponds to 569-717 (YIRLKLQQRS…KDECIIATEV (149 aa)). The tract at residues 649-693 (EDLGKEDSERSEATKCEPLDSDSEEKHRNHLKSDSSERKRTESLC) is disordered.

In terms of assembly, interacts with mib. Post-translationally, ubiquitinated by mib, leading to its endocytosis and subsequent degradation. Expressed in both mesodermal and neuroectodermal regions. In the developing nervous system, it is expressed in overlapping regions with deltaB (dlb) and deltaA (dla); in the neural plate, dld is expressed in patches of contiguous cells with dla, while dlb is confined to scattered cells within those patches that will differentiate as neurons. In somites, it marks the anterior part of each formed somite, while deltaC (dlc) marks the posterior part. In 24 hours embryos, expressed in the hindbrain in stripes adjacent to rhombomere boundaries, but not in the actual boundary cells.

It localises to the membrane. In terms of biological role, acts as a ligand for Notch receptors and is involved in primary neurogenesis and somitogenesis. Can activate Notch receptors, thereby playing a key role in lateral inhibition, a process that prevents the immediate neighbors of each nascent neural cell from simultaneously embarking on neural differentiation. Required in somite segmentation to keep the oscillations of neighboring presomitic mesoderm cells synchronized. This Danio rerio (Zebrafish) protein is Delta-like protein D (dld).